A 191-amino-acid chain; its full sequence is Cyclin-dependent kinase inhibitor 1 (191 aa).

Positions 62 to 81 are disordered; sequence LIHLEEEDKDGDTETSTYRR. The segment at 162 to 191 is required for inhibitory function and interaction with CDK kinase complexes; it reads QLKEKFKKKYNFDFEKEKPLEGRYEWVKLE.

It belongs to the CDI family. ICK/KRP subfamily. Specifically interacts with CDKA-1, but not with CDKB1-1. Interacts with CYCD2-1 and CYCD3-1. In terms of processing, ubiquitinated independently by RKP and SCF (SKP1-CUL1-FBL5/SKP2B) protein ligase complex, leading to proteasomal degradation. As to expression, expressed at low levels in roots, stems, leaves and flowers.

The protein localises to the nucleus. The protein resides in the nucleoplasm. Functionally, binds and inhibits CYCD2-1/CDKA-1 kinase complex activity. Regulates cell division which is crucial for plant growth, development and morphogenesis. Functions in turning cells from a mitotic to an endoreplicating cell cycle mode. Acts cell- and non-cell-autonomously to regulate endoreduplication by allowing S phase progression, but blocking entry into mitosis. Keeps on the one hand the plant cell cycle locally controlled, and on the other hand provides a possibility of linking cell cycle control in single cells with the supracellular organization of a tissue or an organ. May target specifically CDKA-1. In Arabidopsis thaliana (Mouse-ear cress), this protein is Cyclin-dependent kinase inhibitor 1 (KRP1).